The chain runs to 702 residues: Elongation factor G (702 aa).

The tr-type G domain maps to 8–290 (ERYRNIGISA…AVIDYLPSPV (283 aa)). GTP-binding positions include 17 to 24 (AHIDAGKT), 88 to 92 (DTPGH), and 142 to 145 (NKMD).

The protein belongs to the TRAFAC class translation factor GTPase superfamily. Classic translation factor GTPase family. EF-G/EF-2 subfamily.

The protein resides in the cytoplasm. Its function is as follows. Catalyzes the GTP-dependent ribosomal translocation step during translation elongation. During this step, the ribosome changes from the pre-translocational (PRE) to the post-translocational (POST) state as the newly formed A-site-bound peptidyl-tRNA and P-site-bound deacylated tRNA move to the P and E sites, respectively. Catalyzes the coordinated movement of the two tRNA molecules, the mRNA and conformational changes in the ribosome. In Acidovorax sp. (strain JS42), this protein is Elongation factor G.